Here is a 471-residue protein sequence, read N- to C-terminus: Glutamate--tRNA ligase (471 aa).

The short motif at 9-19 is the 'HIGH' region element; that stretch reads PSPTGYLHVGG. The Zn(2+) site is built by Cys98, Cys100, Cys125, and His127. Residues 237–241 carry the 'KMSKS' region motif; it reads KLSKR. Lys240 serves as a coordination point for ATP.

This sequence belongs to the class-I aminoacyl-tRNA synthetase family. Glutamate--tRNA ligase type 1 subfamily. In terms of assembly, monomer. Requires Zn(2+) as cofactor.

It is found in the cytoplasm. The enzyme catalyses tRNA(Glu) + L-glutamate + ATP = L-glutamyl-tRNA(Glu) + AMP + diphosphate. Catalyzes the attachment of glutamate to tRNA(Glu) in a two-step reaction: glutamate is first activated by ATP to form Glu-AMP and then transferred to the acceptor end of tRNA(Glu). This is Glutamate--tRNA ligase from Salmonella gallinarum (strain 287/91 / NCTC 13346).